Consider the following 412-residue polypeptide: Serine hydroxymethyltransferase (412 aa).

(6S)-5,6,7,8-tetrahydrofolate is bound by residues Leu116 and 120 to 122 (GHL). Lys225 is subject to N6-(pyridoxal phosphate)lysine. Residues Glu241 and 350 to 352 (SPF) each bind (6S)-5,6,7,8-tetrahydrofolate.

It belongs to the SHMT family. As to quaternary structure, homodimer. Pyridoxal 5'-phosphate serves as cofactor.

Its subcellular location is the cytoplasm. It catalyses the reaction (6R)-5,10-methylene-5,6,7,8-tetrahydrofolate + glycine + H2O = (6S)-5,6,7,8-tetrahydrofolate + L-serine. The protein operates within one-carbon metabolism; tetrahydrofolate interconversion. It participates in amino-acid biosynthesis; glycine biosynthesis; glycine from L-serine: step 1/1. Its function is as follows. Catalyzes the reversible interconversion of serine and glycine with tetrahydrofolate (THF) serving as the one-carbon carrier. This reaction serves as the major source of one-carbon groups required for the biosynthesis of purines, thymidylate, methionine, and other important biomolecules. Also exhibits THF-independent aldolase activity toward beta-hydroxyamino acids, producing glycine and aldehydes, via a retro-aldol mechanism. This chain is Serine hydroxymethyltransferase, found in Enterococcus faecalis (strain ATCC 700802 / V583).